Here is a 252-residue protein sequence, read N- to C-terminus: uncharacterized protein (252 aa).

An N-terminal signal peptide occupies residues 1-25 (MRKKKFLSRFAFGSLFLLCGTILSA). Cys-26 is lipidated: N-palmitoyl cysteine. The S-diacylglycerol cysteine moiety is linked to residue Cys-26.

It belongs to the MG439/MG440 family.

The protein localises to the cell membrane. This is an uncharacterized protein from Mycoplasma pneumoniae (strain ATCC 29342 / M129 / Subtype 1) (Mycoplasmoides pneumoniae).